Consider the following 426-residue polypeptide: 3-phosphoshikimate 1-carboxyvinyltransferase (426 aa).

Residues K23, S24, and R28 each coordinate 3-phosphoshikimate. K23 contributes to the phosphoenolpyruvate binding site. Phosphoenolpyruvate-binding residues include G96 and R124. Residues T170, S171, Q172, S198, D314, and K341 each contribute to the 3-phosphoshikimate site. A phosphoenolpyruvate-binding site is contributed by Q172. D314 functions as the Proton acceptor in the catalytic mechanism. Residues R345, R386, and K411 each coordinate phosphoenolpyruvate.

It belongs to the EPSP synthase family. In terms of assembly, monomer.

It is found in the cytoplasm. The enzyme catalyses 3-phosphoshikimate + phosphoenolpyruvate = 5-O-(1-carboxyvinyl)-3-phosphoshikimate + phosphate. It participates in metabolic intermediate biosynthesis; chorismate biosynthesis; chorismate from D-erythrose 4-phosphate and phosphoenolpyruvate: step 6/7. Catalyzes the transfer of the enolpyruvyl moiety of phosphoenolpyruvate (PEP) to the 5-hydroxyl of shikimate-3-phosphate (S3P) to produce enolpyruvyl shikimate-3-phosphate and inorganic phosphate. This Trichormus variabilis (strain ATCC 29413 / PCC 7937) (Anabaena variabilis) protein is 3-phosphoshikimate 1-carboxyvinyltransferase.